The chain runs to 48 residues: Keratin-associated protein 22-1 (48 aa).

Interacts with hair keratins.

In terms of biological role, in the hair cortex, hair keratin intermediate filaments are embedded in an interfilamentous matrix, consisting of hair keratin-associated proteins (KRTAP), which are essential for the formation of a rigid and resistant hair shaft through their extensive disulfide bond cross-linking with abundant cysteine residues of hair keratins. The matrix proteins include the high-sulfur and high-glycine-tyrosine keratins. This chain is Keratin-associated protein 22-1 (KRTAP22-1), found in Homo sapiens (Human).